We begin with the raw amino-acid sequence, 619 residues long: Type VI secretion system component TssF1 (619 aa).

In terms of assembly, interacts with TssA1.

In terms of biological role, core component of the H1 type VI (H1-T6SS) secretion system that plays a role in the release of toxins targeting both eukaryotic and prokaryotic species. The chain is Type VI secretion system component TssF1 from Pseudomonas aeruginosa (strain ATCC 15692 / DSM 22644 / CIP 104116 / JCM 14847 / LMG 12228 / 1C / PRS 101 / PAO1).